The chain runs to 192 residues: Putative cyclic ADP-D-ribose synthase ThsB1 (192 aa).

It belongs to the Thoeris B TIR-like family. In terms of assembly, monomer; not seen to interact with ThsA.

The protein localises to the cytoplasm. Activated upon phage infection. In terms of biological role, TIR-like domain-containing component of the Thoeris antiviral defense system, composed of ThsA and ThsB. Expression of ThsA and ThsB in B.subtilis (strain BEST7003) confers resistance to phages SBSphiC, SBSphiJ and SPO1. Phage infection activates this protein so that 30 to 45 minutes post-infection with phage SPO1 it generates a signal molecule that in turn activates the NAD(+) hydrolase activity of ThsA. The signal is similar to cyclic ADP-D-ribose, but how it differs is unknown. In vitro purified (but unactivated) ThsB has no NAD(+) hydrolyzing activity, no activity on AMP, CMP, GMP or UMP, does not alter the activity of ThsA, does not bind DNA. Hydrolyzes NAD(+) to make a cyclic ADP-D-ribose (cADPR) signaling molecule; might make 3'cADPR. This chain is Putative cyclic ADP-D-ribose synthase ThsB1, found in Bacillus cereus (strain MSX-D12).